We begin with the raw amino-acid sequence, 622 residues long: Interleukin-1 receptor-associated kinase-like 2 (622 aa).

The Death domain maps to 13–94; the sequence is LDDLCRNIDT…RAAQIVLSWK (82 aa). The region spanning 208–473 is the Protein kinase domain; sequence FDQSHRISEG…LPEACEEAWA (266 aa). ATP is bound by residues 214–222, Lys235, and 335–338; these read ISEGTFADI and KSAN. Disordered stretches follow at residues 511-532 and 553-591; these read RVSE…VDNS and LFTG…ETSW. 2 stretches are compositionally biased toward polar residues: residues 513–523 and 561–590; these read SEATGSSSNTP and QPST…TETS.

Belongs to the protein kinase superfamily. TKL Ser/Thr protein kinase family. Pelle subfamily. As to quaternary structure, interacts with MYD88. IL-1 stimulation leads to the formation of a signaling complex which dissociates from the IL-1 receptor following the binding of PELI1. Ubiquitously expressed, with a higher expression observed in brain, spleen and liver. Isoform 1 and isoform 2 are considered agonist and isoform 3 and isoform 4 are considered antagonist.

In terms of biological role, binds to the IL-1 type I receptor following IL-1 engagement, triggering intracellular signaling cascades leading to transcriptional up-regulation and mRNA stabilization. The chain is Interleukin-1 receptor-associated kinase-like 2 (Irak2) from Mus musculus (Mouse).